A 118-amino-acid chain; its full sequence is MARVKRGVIARARHKKILKLAKGYYGARSRVFRVAKQAVIKAGQYAYRDRRQRKRQFRALWIARINAGARVNGLSYSRLIAGLKKASIEIDRKVLADLAVNEKAAFAAIVEKAKAVLA.

Belongs to the bacterial ribosomal protein bL20 family.

Binds directly to 23S ribosomal RNA and is necessary for the in vitro assembly process of the 50S ribosomal subunit. It is not involved in the protein synthesizing functions of that subunit. In Ectopseudomonas mendocina (strain ymp) (Pseudomonas mendocina), this protein is Large ribosomal subunit protein bL20.